A 453-amino-acid chain; its full sequence is Plasticin (453 aa).

The interval 1-51 (MSHSTFSHLFSPHFGAPVYSPVSSRIGGRYVSSSVPTRSVDFRSRSSAPAP) is head. Residues 71–112 (FATRSNEKRELQELNDRFASFIEKVRHLEQQNSKLILELGQY) form a coil 1A region. The IF rod domain maps to 77–390 (EKRELQELND…KLLEGEENRI (314 aa)). The interval 113-126 (KDQHQGSTGRINEL) is linker 1. The tract at residues 127–222 (CQQEMRELRR…KMHDEEIQDV (96 aa)) is coil 1B. Positions 223–245 (QVSVQSQQMKMEVMETSSRPDLT) are linker 12. Positions 246–391 (GALRDIRAQY…LLEGEENRIV (146 aa)) are coil 2. The tail stretch occupies residues 392–453 (VPIMKMPSMS…KKDSHGQGKD (62 aa)). Residues 421–453 (IKTVETRDGEVVKESTKEKGRDEKKDSHGQGKD) form a disordered region. Residues 424–453 (VETRDGEVVKESTKEKGRDEKKDSHGQGKD) show a composition bias toward basic and acidic residues.

Belongs to the intermediate filament family. In terms of tissue distribution, optic nerve.

Functionally, type III neurofilament. The sequence is that of Plasticin from Carassius auratus (Goldfish).